The chain runs to 179 residues: DELTA-actitoxin-Afr1e (179 aa).

Residues 1–29 (SADVAGAVIDGAGLGFDVLKTVLEALGNV) form an N-terminal alpha-helix that contributes to the pore region. The interval 11-30 (GAGLGFDVLKTVLEALGNVK) is N-terminal region. Arg31 is an an N-(acyl)-sphingosylphosphocholine binding site. N-acetyl-D-glucosamine 6-sulfate is bound by residues Tyr51 and Arg53. Arg53, Ser54, Arg79, Gly85, Tyr108, Tyr113, Ser114, Trp116, Tyr133, Tyr137, Tyr138, Arg144, and Gly168 together coordinate an N-(acyl)-sphingosylphosphocholine. The tract at residues 105-120 (SVPYDYNWYSNWWNVR) is trp-rich region, which is important for the binding to lipid membrane. Tyr138 serves as a coordination point for N-acetyl-D-glucosamine 6-sulfate. The Cell attachment site, crucial for protein stability signature appears at 144–146 (RGD).

The protein belongs to the actinoporin family. Sea anemone subfamily. In terms of assembly, octamer or nonamer in membranes. Monomer in the soluble state.

It is found in the secreted. Its subcellular location is the nematocyst. The protein localises to the target cell membrane. In terms of biological role, pore-forming toxin (PFT) that consists of a crown-shaped octamer or nonamer that forms cation-selective hydrophilic pores of about 1.5 nm (inside) and 13 nm (outside) and causes cytolysis. It causes cardiac stimulation. Also causes hemolysis (HC(50)=1.6 nM). Interestingly, the Phe-16 is crucial for hemolysis. Pore formation is a multi-step process that involves specific recognition of membrane sphingomyelin (but neither cholesterol nor phosphatidylcholine) using aromatic rich region and adjacent phosphocholine (POC) binding site, firm binding to the membrane (mainly driven by hydrophobic interactions) accompanied by the transfer of the N-terminal region to the lipid-water interface and finally pore formation after oligomerization of monomers. It is probable that a dimeric form is an assembly intermediate before the complete oligomerization. The formation of stable pores occurs only in vesicles composed of DOPC/SM (there is no oligomerization when the PFT is treated with vesicles of DOPC or SM alone). The transmembrane pore displays 8 lateral perforations, one at each subunit-subunit interface, partially occupied by the acyl-chain region of a bridging lipid. Each pore contains 24 lipid molecules, firmly bound to each subunit, that is, 3 lipids (L1, L2, L3, L4 and/or L5) are associated to each subunit. Lipid L1 bridges 2 subunits, whereas lipids L2 and L3 bind to sites at single subunit. This Actinia fragacea (Strawberry anemone) protein is DELTA-actitoxin-Afr1e.